Reading from the N-terminus, the 137-residue chain is Ribosome-binding factor A (137 aa).

A disordered region spans residues 110–137 (RIQQEKEGATDDRDQNDSGEDATPHSND). Positions 112–125 (QQEKEGATDDRDQN) are enriched in basic and acidic residues.

The protein belongs to the RbfA family. Monomer. Binds 30S ribosomal subunits, but not 50S ribosomal subunits or 70S ribosomes.

It localises to the cytoplasm. In terms of biological role, one of several proteins that assist in the late maturation steps of the functional core of the 30S ribosomal subunit. Associates with free 30S ribosomal subunits (but not with 30S subunits that are part of 70S ribosomes or polysomes). Required for efficient processing of 16S rRNA. May interact with the 5'-terminal helix region of 16S rRNA. The chain is Ribosome-binding factor A from Rhodopirellula baltica (strain DSM 10527 / NCIMB 13988 / SH1).